The primary structure comprises 283 residues: Bifunctional protein FolD (283 aa).

NADP(+)-binding positions include 164 to 166 and Ser-189; that span reads GRS.

The protein belongs to the tetrahydrofolate dehydrogenase/cyclohydrolase family. In terms of assembly, homodimer.

It carries out the reaction (6R)-5,10-methylene-5,6,7,8-tetrahydrofolate + NADP(+) = (6R)-5,10-methenyltetrahydrofolate + NADPH. The catalysed reaction is (6R)-5,10-methenyltetrahydrofolate + H2O = (6R)-10-formyltetrahydrofolate + H(+). The protein operates within one-carbon metabolism; tetrahydrofolate interconversion. Catalyzes the oxidation of 5,10-methylenetetrahydrofolate to 5,10-methenyltetrahydrofolate and then the hydrolysis of 5,10-methenyltetrahydrofolate to 10-formyltetrahydrofolate. This Lactobacillus acidophilus (strain ATCC 700396 / NCK56 / N2 / NCFM) protein is Bifunctional protein FolD.